The primary structure comprises 282 residues: Pantothenate synthetase (282 aa).

An ATP-binding site is contributed by 30 to 37 (MGYLHEGH). The Proton donor role is filled by His-37. A (R)-pantoate-binding site is contributed by Gln-61. Gln-61 is a beta-alanine binding site. 147–150 (GMKD) is a binding site for ATP. (R)-pantoate is bound at residue Gln-153. ATP is bound by residues Val-176 and 184-187 (KSSR).

The protein belongs to the pantothenate synthetase family. Homodimer.

Its subcellular location is the cytoplasm. The enzyme catalyses (R)-pantoate + beta-alanine + ATP = (R)-pantothenate + AMP + diphosphate + H(+). The protein operates within cofactor biosynthesis; (R)-pantothenate biosynthesis; (R)-pantothenate from (R)-pantoate and beta-alanine: step 1/1. Its function is as follows. Catalyzes the condensation of pantoate with beta-alanine in an ATP-dependent reaction via a pantoyl-adenylate intermediate. This chain is Pantothenate synthetase, found in Bacillus cereus (strain ZK / E33L).